A 346-amino-acid chain; its full sequence is Small ribosomal subunit biogenesis GTPase RsgA (346 aa).

A disordered region spans residues 1 to 25 (MAKRKLTQNQTRRIQSNNAKTLHRH). The span at 7–20 (TQNQTRRIQSNNAK) shows a compositional bias: polar residues. A CP-type G domain is found at 103–271 (ENEISRPDYY…LIDSPGIREF (169 aa)). Residues 159–162 (NKVD) and 213–221 (GQSGVGKSS) contribute to the GTP site. 4 residues coordinate Zn(2+): Cys295, Cys300, His302, and Cys308.

The protein belongs to the TRAFAC class YlqF/YawG GTPase family. RsgA subfamily. Monomer. Associates with 30S ribosomal subunit, binds 16S rRNA. The cofactor is Zn(2+).

Its subcellular location is the cytoplasm. In terms of biological role, one of several proteins that assist in the late maturation steps of the functional core of the 30S ribosomal subunit. Helps release RbfA from mature subunits. May play a role in the assembly of ribosomal proteins into the subunit. Circularly permuted GTPase that catalyzes slow GTP hydrolysis, GTPase activity is stimulated by the 30S ribosomal subunit. This Haemophilus influenzae (strain ATCC 51907 / DSM 11121 / KW20 / Rd) protein is Small ribosomal subunit biogenesis GTPase RsgA.